Here is a 512-residue protein sequence, read N- to C-terminus: Peroxisomal N(1)-acetyl-spermine/spermidine oxidase (512 aa).

An N-acetylmethionine modification is found at Met1. Positions 1-6 are excised as a propeptide; sequence MQSGGR. FAD-binding positions include Ala25, Glu46, Arg54, and 70 to 71; that span reads HW. Substrate contacts are provided by His73 and Val195. Val248 is a binding site for FAD. Asn321 lines the substrate pocket. Residues Glu473 and 482 to 483 each bind FAD; that span reads TT. The short motif at 510-512 is the Microbody targeting signal element; the sequence is PRL.

Belongs to the flavin monoamine oxidase family. Monomer. Requires FAD as cofactor.

The protein localises to the peroxisome. It is found in the cytoplasm. It carries out the reaction N(1)-acetylspermine + O2 + H2O = 3-acetamidopropanal + spermidine + H2O2. The enzyme catalyses N(1)-acetylspermidine + O2 + H2O = 3-acetamidopropanal + putrescine + H2O2. The catalysed reaction is N(1),N(12)-diacetylspermine + O2 + H2O = 3-acetamidopropanal + N(1)-acetylspermidine + H2O2. Its pathway is amine and polyamine metabolism; spermine metabolism. Flavoenzyme which catalyzes the oxidation of N(1)-acetylspermine to spermidine and is thus involved in the polyamine back-conversion. Can also oxidize N(1)-acetylspermidine to putrescine. Substrate specificity: N(1)-acetylspermine = N(1)-acetylspermidine &gt; N(1),N(12)-diacylspermine &gt;&gt; spermine. Does not oxidize spermidine. Plays an important role in the regulation of polyamine intracellular concentration. The polypeptide is Peroxisomal N(1)-acetyl-spermine/spermidine oxidase (PAOX) (Bos taurus (Bovine)).